The chain runs to 143 residues: Putative pre-16S rRNA nuclease (143 aa).

This sequence belongs to the YqgF nuclease family.

The protein resides in the cytoplasm. Its function is as follows. Could be a nuclease involved in processing of the 5'-end of pre-16S rRNA. The sequence is that of Putative pre-16S rRNA nuclease from Ralstonia pickettii (strain 12J).